Here is an 880-residue protein sequence, read N- to C-terminus: Nonsense-mediated mRNA decay factor SMG7-like (880 aa).

TPR repeat units follow at residues 149–183 (QEQYLKAHEHPNWSTAATYYLEAAKSWPDSGNPHN) and 184–217 (QLAVLATYVSDELLALYHCVRSLAVKEPFPGASN). The segment at 669–711 (RLGLSKPNGLGPIDETGPVSAFDSLSINSSTEHPASSYSPPTP) is disordered. The segment covering 691–701 (DSLSINSSTEH) has biased composition (polar residues).

Functionally, may play a role in growth and development. In Arabidopsis thaliana (Mouse-ear cress), this protein is Nonsense-mediated mRNA decay factor SMG7-like.